Here is a 210-residue protein sequence, read N- to C-terminus: Endonuclease III (210 aa).

The 20-residue stretch at 108–127 (FKALIKLPGVGRKTANVVLN) folds into the HhH domain. Positions 187, 194, 197, and 203 each coordinate [4Fe-4S] cluster.

It belongs to the Nth/MutY family. [4Fe-4S] cluster serves as cofactor.

The catalysed reaction is 2'-deoxyribonucleotide-(2'-deoxyribose 5'-phosphate)-2'-deoxyribonucleotide-DNA = a 3'-end 2'-deoxyribonucleotide-(2,3-dehydro-2,3-deoxyribose 5'-phosphate)-DNA + a 5'-end 5'-phospho-2'-deoxyribonucleoside-DNA + H(+). In terms of biological role, DNA repair enzyme that has both DNA N-glycosylase activity and AP-lyase activity. The DNA N-glycosylase activity releases various damaged pyrimidines from DNA by cleaving the N-glycosidic bond, leaving an AP (apurinic/apyrimidinic) site. The AP-lyase activity cleaves the phosphodiester bond 3' to the AP site by a beta-elimination, leaving a 3'-terminal unsaturated sugar and a product with a terminal 5'-phosphate. In Rickettsia conorii (strain ATCC VR-613 / Malish 7), this protein is Endonuclease III.